The chain runs to 20 residues: Putative 60 kDa spermidine-binding protein (20 aa).

Residues 1–20 (SXAAVVEPPETSQNRIAKGE) are disordered. The segment covering 10–20 (ETSQNRIAKGE) has biased composition (polar residues).

Dimer of 18 kDa and 60 kDa subunit.

The protein localises to the microsome membrane. Its subcellular location is the endoplasmic reticulum membrane. Functionally, may have spermidine-binding activity. The polypeptide is Putative 60 kDa spermidine-binding protein (Zea mays (Maize)).